The primary structure comprises 282 residues: Ribosomal RNA small subunit methyltransferase A (282 aa).

Residues 1–21 (MPDFPKEHATPMSNRPPAHQA) are disordered. N28, L30, G55, E76, D101, and N126 together coordinate S-adenosyl-L-methionine.

Belongs to the class I-like SAM-binding methyltransferase superfamily. rRNA adenine N(6)-methyltransferase family. RsmA subfamily.

Its subcellular location is the cytoplasm. It catalyses the reaction adenosine(1518)/adenosine(1519) in 16S rRNA + 4 S-adenosyl-L-methionine = N(6)-dimethyladenosine(1518)/N(6)-dimethyladenosine(1519) in 16S rRNA + 4 S-adenosyl-L-homocysteine + 4 H(+). Its function is as follows. Specifically dimethylates two adjacent adenosines (A1518 and A1519) in the loop of a conserved hairpin near the 3'-end of 16S rRNA in the 30S particle. May play a critical role in biogenesis of 30S subunits. In Chromohalobacter salexigens (strain ATCC BAA-138 / DSM 3043 / CIP 106854 / NCIMB 13768 / 1H11), this protein is Ribosomal RNA small subunit methyltransferase A.